A 363-amino-acid polypeptide reads, in one-letter code: Protein-glutamate methylesterase/protein-glutamine glutaminase 1 (363 aa).

The region spanning 7–124 (KVLIVDDSAL…SRGMQEYARE (118 aa)) is the Response regulatory domain. Aspartate 58 carries the post-translational modification 4-aspartylphosphate. The CheB-type methylesterase domain occupies 164–356 (FSSTEKIIVI…RRLFGWLESQ (193 aa)). Catalysis depends on residues serine 176, histidine 202, and aspartate 298.

This sequence belongs to the CheB family. Phosphorylated by CheA. Phosphorylation of the N-terminal regulatory domain activates the methylesterase activity.

Its subcellular location is the cytoplasm. The catalysed reaction is [protein]-L-glutamate 5-O-methyl ester + H2O = L-glutamyl-[protein] + methanol + H(+). The enzyme catalyses L-glutaminyl-[protein] + H2O = L-glutamyl-[protein] + NH4(+). Functionally, involved in chemotaxis. Part of a chemotaxis signal transduction system that modulates chemotaxis in response to various stimuli. Catalyzes the demethylation of specific methylglutamate residues introduced into the chemoreceptors (methyl-accepting chemotaxis proteins or MCP) by CheR. Also mediates the irreversible deamidation of specific glutamine residues to glutamic acid. The chain is Protein-glutamate methylesterase/protein-glutamine glutaminase 1 from Geobacter metallireducens (strain ATCC 53774 / DSM 7210 / GS-15).